Reading from the N-terminus, the 96-residue chain is UPF0251 protein Spea_3639 (96 aa).

It belongs to the UPF0251 family.

This Shewanella pealeana (strain ATCC 700345 / ANG-SQ1) protein is UPF0251 protein Spea_3639.